The following is a 525-amino-acid chain: Ent-kaurene oxidase (525 aa).

The chain crosses the membrane as a helical span at residues 31–51 (VHWLIYVAFGAWLCSYVIHVL). Residue Cys466 participates in heme binding.

The protein belongs to the cytochrome P450 family. It depends on heme as a cofactor.

Its subcellular location is the membrane. It carries out the reaction ent-kaur-16-ene + 3 reduced [NADPH--hemoprotein reductase] + 3 O2 = ent-kaur-16-en-19-oate + 3 oxidized [NADPH--hemoprotein reductase] + 4 H2O + 4 H(+). Its pathway is plant hormone biosynthesis; gibberellin biosynthesis. Catalyzes three successive oxidations of the 4-methyl group of ent-kaurene giving kaurenoic acid, a key step in gibberellin (GA) biosynthesis. In Fusarium fujikuroi (Bakanae and foot rot disease fungus), this protein is Ent-kaurene oxidase (CYP503A1).